The primary structure comprises 238 residues: 1-(5-phosphoribosyl)-5-[(5-phosphoribosylamino)methylideneamino] imidazole-4-carboxamide isomerase (238 aa).

The active-site Proton acceptor is Asp-7. The active-site Proton donor is Asp-129.

Belongs to the HisA/HisF family.

Its subcellular location is the cytoplasm. The catalysed reaction is 1-(5-phospho-beta-D-ribosyl)-5-[(5-phospho-beta-D-ribosylamino)methylideneamino]imidazole-4-carboxamide = 5-[(5-phospho-1-deoxy-D-ribulos-1-ylimino)methylamino]-1-(5-phospho-beta-D-ribosyl)imidazole-4-carboxamide. Its pathway is amino-acid biosynthesis; L-histidine biosynthesis; L-histidine from 5-phospho-alpha-D-ribose 1-diphosphate: step 4/9. This Leuconostoc mesenteroides subsp. mesenteroides (strain ATCC 8293 / DSM 20343 / BCRC 11652 / CCM 1803 / JCM 6124 / NCDO 523 / NBRC 100496 / NCIMB 8023 / NCTC 12954 / NRRL B-1118 / 37Y) protein is 1-(5-phosphoribosyl)-5-[(5-phosphoribosylamino)methylideneamino] imidazole-4-carboxamide isomerase.